We begin with the raw amino-acid sequence, 908 residues long: MEEGGRDKAPVQPQQSPAAALGGTDEKPSGKERRDAGDKDKEQELSEEDKQLQDELEMLVERLGEKDTSLYRPALEELRRQIRSSTTSMTSVPKPLKFLRPHYGKLKEIYENMAPGENKRFAADIISVLAMTMSGERECLKYRLVGSQEELASWGHEYVRHLAGEVAKEWQELDDAEKVQREPLLTLVKEIIPYNMAHNAEHEACDLLMEIEQVDMLEKDIDENAYAKVCLYLTSCVNYVPEPENSALLRCALGVFRKFSRFPEALRLALMLNDMELVEDIFTSCKDVVVQKQMAFMLGRHGVFLELSEDVEEYEDLTEIMSNVQLNSNFLALARELDIMEPKVPDDIYKTHLENNRFGGSGSQVDSARMNLASSFVNGFVNAAFGQDKLLTDDGNKWLYKNKDHGMLSAAASLGMILLWDVDGGLTQIDKYLYSSEDYIKSGALLACGIVNSGVRNECDPALALLSDYVLHNSNTMRLGSIFGLGLAYAGSNREDVLTLLLPVMGDSKSSMEVAGVTALACGMIAVGSCNGDVTSTILQTIMEKSETELKDTYARWLPLGLGLNHLGKGEAIEAILAALEVVSEPFRSFANTLVDVCAYAGSGNVLKVQQLLHICSEHFDSKEKEEDKDKKEKKDKDKKEAPADMGAHQGVAVLGIALIAMGEEIGAEMALRTFGHLLRYGEPTLRRAVPLALALISVSNPRLNILDTLSKFSHDADPEVSYNSIFAMGMVGSGTNNARLAAMLRQLAQYHAKDPNNLFMVRLAQGLTHLGKGTLTLCPYHSDRQLMSQVAVAGLLTVLVSFLDVRNIILGKSHYVLYGLVAAMQPRMLVTFDEELRPLPVSVRVGQAVDVVGQAGKPKTITGFQTHTTPVLLAHGERAELATEEFLPVTPILEGFVILRKNPNYDL.

Residue M1 is modified to N-acetylmethionine. Positions 1–52 (MEEGGRDKAPVQPQQSPAAALGGTDEKPSGKERRDAGDKDKEQELSEEDKQL) are disordered. A compositionally biased stretch (low complexity) spans 10–20 (PVQPQQSPAAA). S16 bears the Phosphoserine mark. A Phosphothreonine modification is found at T24. Over residues 24–52 (TDEKPSGKERRDAGDKDKEQELSEEDKQL) the composition is skewed to basic and acidic residues. Phosphoserine occurs at positions 29 and 147. Y194 bears the Phosphotyrosine mark. A phosphoserine mark is found at S361 and S363. 5 PC repeats span residues 409–442 (SAAASLGMILLWDVDGGLTQIDKYLYSSEDYIKS), 443–479 (GALLACGIVNSGVRNECDPALALLSDYVLHNSNTMRL), 480–514 (GSIFGLGLAYAGSNREDVLTLLLPVMGDSKSSMEV), 517–551 (VTALACGMIAVGSCNGDVTSTILQTIMEKSETELK), and 560–589 (LGLGLNHLGKGEAIEAILAALEVVSEPFRS). At K551 the chain carries N6-acetyllysine. Residues 623–643 (KEKEEDKDKKEKKDKDKKEAP) show a composition bias toward basic and acidic residues. The interval 623-645 (KEKEEDKDKKEKKDKDKKEAPAD) is disordered. 2 PC repeats span residues 692–723 (LALALISVSNPRLNILDTLSKFSHDADPEVSY) and 742–757 (AAMLRQLAQYHAKDPN). Residues 708-903 (DTLSKFSHDA…LEGFVILRKN (196 aa)) are required for interaction with UBLCP1.

This sequence belongs to the proteasome subunit S2 family. As to quaternary structure, component of the 19S proteasome regulatory particle complex. The 26S proteasome consists of a 20S core particle (CP) and two 19S regulatory subunits (RP). The regulatory particle is made of a lid composed of 9 subunits, a base containing 6 ATPases and few additional components including PSMD2. Interacts with RPGRIP1L. Interacts with CRY1 in a KDM8-dependent manner. Interacts (via C-terminus) with phosphatase UBLCP1 (via ubiquitin-like domain); the interaction recruits UBLCP1 to the 19S regulatory particle where it dephosphorylates 19S subunit PSMC2/RPT1 which impairs PSMC2 ATPase activity and disrupts 26S proteasome assembly.

Component of the 26S proteasome, a multiprotein complex involved in the ATP-dependent degradation of ubiquitinated proteins. This complex plays a key role in the maintenance of protein homeostasis by removing misfolded or damaged proteins, which could impair cellular functions, and by removing proteins whose functions are no longer required. Therefore, the proteasome participates in numerous cellular processes, including cell cycle progression, apoptosis, or DNA damage repair. Its function is as follows. Binds to the intracellular domain of tumor necrosis factor type 1 receptor. The binding domain of TRAP1 and TRAP2 resides outside the death domain of TNFR1. The chain is 26S proteasome non-ATPase regulatory subunit 2 (PSMD2) from Pongo abelii (Sumatran orangutan).